Reading from the N-terminus, the 45-residue chain is DNA-directed RNA polymerase subunit Rpo12 (45 aa).

Cysteine 8, cysteine 23, and cysteine 26 together coordinate Zn(2+).

The protein belongs to the archaeal Rpo12/eukaryotic RPC10 RNA polymerase subunit family. In terms of assembly, part of the RNA polymerase complex. It depends on Zn(2+) as a cofactor.

It is found in the cytoplasm. It catalyses the reaction RNA(n) + a ribonucleoside 5'-triphosphate = RNA(n+1) + diphosphate. Its function is as follows. DNA-dependent RNA polymerase (RNAP) catalyzes the transcription of DNA into RNA using the four ribonucleoside triphosphates as substrates. The chain is DNA-directed RNA polymerase subunit Rpo12 from Methanothrix thermoacetophila (strain DSM 6194 / JCM 14653 / NBRC 101360 / PT) (Methanosaeta thermophila).